Here is a 595-residue protein sequence, read N- to C-terminus: Putative lipase atg15 (595 aa).

Residues 1-20 (MKGLRGHNKKSFWGNTRLSD) are Cytoplasmic-facing. The helical; Signal-anchor for type II membrane protein transmembrane segment at 21 to 41 (LLWPVTLLPGLISAYQPVYLG) threads the bilayer. Over 42–595 (SRQSSPFLPP…TTTGKHLGRF (554 aa)) the chain is Lumenal. Asparagine 164, asparagine 199, asparagine 221, asparagine 279, and asparagine 303 each carry an N-linked (GlcNAc...) asparagine glycan. Residue serine 319 is the Charge relay system of the active site. N-linked (GlcNAc...) asparagine glycosylation is present at asparagine 465.

The protein belongs to the AB hydrolase superfamily. Lipase family. In terms of assembly, binds to both phosphatidylinositol (PI) and phosphatidylinositol 3,5-bisphosphate (PIP2).

It is found in the endosome. Its subcellular location is the multivesicular body membrane. It localises to the prevacuolar compartment membrane. The catalysed reaction is a triacylglycerol + H2O = a diacylglycerol + a fatty acid + H(+). In terms of biological role, lipase which is essential for lysis of subvacuolar cytoplasm to vacuole targeted bodies and intravacuolar autophagic bodies. Involved in the lysis of intravacuolar multivesicular body (MVB) vesicles. The intravacuolar membrane disintegration by atg15 is critical to life span extension. This is Putative lipase atg15 (atg15) from Aspergillus niger (strain ATCC MYA-4892 / CBS 513.88 / FGSC A1513).